Consider the following 124-residue polypeptide: MADLKKLAEEIVGLTLLEAQELKNILKDEYGIEPAAGGAVMVAGPAAGPAEAAEEKTEFDVVLVDAGANKINVIKEVRGITGLGLKEAKDLVEAGGKVKEGASKADAEEMKKKLEAAGAKVELK.

It belongs to the bacterial ribosomal protein bL12 family. As to quaternary structure, homodimer. Part of the ribosomal stalk of the 50S ribosomal subunit. Forms a multimeric L10(L12)X complex, where L10 forms an elongated spine to which 2 to 4 L12 dimers bind in a sequential fashion. Binds GTP-bound translation factors.

Its function is as follows. Forms part of the ribosomal stalk which helps the ribosome interact with GTP-bound translation factors. Is thus essential for accurate translation. The protein is Large ribosomal subunit protein bL12 of Paracoccus denitrificans (strain Pd 1222).